The sequence spans 224 residues: Type VII secretion system protein EsaE (224 aa).

As to quaternary structure, interacts with EssD.

Functionally, component of the type VII secretion system (Ess). Plays a role in Esx protein secretion. Plays an essential role in the processing and secretion of EssD. The polypeptide is Type VII secretion system protein EsaE (Staphylococcus aureus (strain USA300)).